The primary structure comprises 670 residues: DNA ligase (670 aa).

NAD(+)-binding positions include 33-37, 82-83, and E114; these read DVEYD and SL. The N6-AMP-lysine intermediate role is filled by K116. NAD(+) contacts are provided by R137, E174, K291, and K315. Zn(2+) is bound by residues C409, C412, C427, and C433. A BRCT domain is found at 593-670; the sequence is DQELPLEGKV…TEEDLIALIS (78 aa).

This sequence belongs to the NAD-dependent DNA ligase family. LigA subfamily. It depends on Mg(2+) as a cofactor. Requires Mn(2+) as cofactor.

The enzyme catalyses NAD(+) + (deoxyribonucleotide)n-3'-hydroxyl + 5'-phospho-(deoxyribonucleotide)m = (deoxyribonucleotide)n+m + AMP + beta-nicotinamide D-nucleotide.. Its function is as follows. DNA ligase that catalyzes the formation of phosphodiester linkages between 5'-phosphoryl and 3'-hydroxyl groups in double-stranded DNA using NAD as a coenzyme and as the energy source for the reaction. It is essential for DNA replication and repair of damaged DNA. This is DNA ligase from Vibrio atlanticus (strain LGP32) (Vibrio splendidus (strain Mel32)).